We begin with the raw amino-acid sequence, 256 residues long: MKLTRKMVLTRAKASELHSVRKLNCWGSRLTDISICQEMPSLEVITLSVNSISTLEPVSRCQRLSELYLRRNRIPSLAELFYLKGLPRLRVLWLAENPCCGTSPHRYRMTVLRTLPRLQKLDNQAVTEEELSRALSEGEEITAAPEREGTGHGGPKLCCTLSSLSSAAETGRDPLDSEEEATSGAQDERGLKPPSRGQFPSLSARDASSSHRGRNVLTAILLLLRELDAEGLEAVQQTVGSRLQALRGEEVQEHAE.

LRR repeat units follow at residues 19-40 (SVRK…QEMP), 41-62 (SLEV…SRCQ), and 63-84 (RLSE…FYLK). Residues 97-137 (NPCCGTSPHRYRMTVLRTLPRLQKLDNQAVTEEELSRALSE) form the LRRCT domain. 2 disordered regions span residues 129-156 (EELS…GGPK) and 168-212 (AETG…SSHR). 2 positions are modified to phosphoserine: serine 136 and serine 177.

Found in a complex with CFAP410, NEK1 and SPATA7. Interacts with NEK1. Widely expressed. Expressed in the retina.

It localises to the mitochondrion. Its subcellular location is the cytoplasm. The protein localises to the cytoskeleton. The protein resides in the cilium basal body. It is found in the cell projection. It localises to the cilium. Its subcellular location is the photoreceptor outer segment. In terms of biological role, plays a role in cilia formation and/or maintenance. Plays a role in the regulation of cell morphology and cytoskeletal organization. Involved in DNA damage repair. The sequence is that of Cilia- and flagella-associated protein 410 from Homo sapiens (Human).